Consider the following 233-residue polypeptide: Lipoprotein-releasing system ATP-binding protein LolD (233 aa).

One can recognise an ABC transporter domain in the interval 6 to 233 (LQCDNLCKRY…TAELSLMGAE (228 aa)). Residue 42–49 (GSSGSGKS) coordinates ATP.

Belongs to the ABC transporter superfamily. Lipoprotein translocase (TC 3.A.1.125) family. The complex is composed of two ATP-binding proteins (LolD) and two transmembrane proteins (LolC and LolE).

It localises to the cell inner membrane. Functionally, part of the ABC transporter complex LolCDE involved in the translocation of mature outer membrane-directed lipoproteins, from the inner membrane to the periplasmic chaperone, LolA. Responsible for the formation of the LolA-lipoprotein complex in an ATP-dependent manner. This chain is Lipoprotein-releasing system ATP-binding protein LolD, found in Shigella boydii serotype 4 (strain Sb227).